The primary structure comprises 240 residues: Protein GrpE (240 aa).

Disordered regions lie at residues 1 to 54 (MSGD…NEAR) and 206 to 240 (VSMGPGPQDGASSQPAEAPAADAPAEDSGSGDGNG). Positions 215 to 233 (GASSQPAEAPAADAPAEDS) are enriched in low complexity.

The protein belongs to the GrpE family. In terms of assembly, homodimer.

Its subcellular location is the cytoplasm. Its function is as follows. Participates actively in the response to hyperosmotic and heat shock by preventing the aggregation of stress-denatured proteins, in association with DnaK and GrpE. It is the nucleotide exchange factor for DnaK and may function as a thermosensor. Unfolded proteins bind initially to DnaJ; upon interaction with the DnaJ-bound protein, DnaK hydrolyzes its bound ATP, resulting in the formation of a stable complex. GrpE releases ADP from DnaK; ATP binding to DnaK triggers the release of the substrate protein, thus completing the reaction cycle. Several rounds of ATP-dependent interactions between DnaJ, DnaK and GrpE are required for fully efficient folding. The chain is Protein GrpE from Synechococcus sp. (strain WH7803).